Reading from the N-terminus, the 215-residue chain is Sodium channel regulatory subunit beta-3 (215 aa).

An N-terminal signal peptide occupies residues 1–22; the sequence is MPAFNRLFPLASLLLILWVGVC. Over 23-156 the chain is Extracellular; sequence FPVCVEVPSE…EEAGEDFTSV (134 aa). Cystine bridges form between Cys-26/Cys-48 and Cys-45/Cys-120. An Ig-like C2-type domain is found at 32–154; it reads ETEAVQGNPM…VTEEAGEDFT (123 aa). Residues Asn-95, Asn-109, Asn-113, and Asn-121 are each glycosylated (N-linked (GlcNAc...) asparagine). Residues 157 to 178 form a helical membrane-spanning segment; sequence VSEIMMYILLVFLTLWLLIEMI. Residues 179–215 lie on the Cytoplasmic side of the membrane; that stretch reads YCYRKVSKAEEAAQENASDYLAIPSENKENSAVPVEE.

The protein belongs to the sodium channel auxiliary subunit SCN3B (TC 8.A.17) family. As to quaternary structure, a voltage-gated sodium (Nav) channel consists of an ion-conducting pore-forming alpha subunit functional on its own that is regulated by one or more beta subunits. Forms homodimers and homotrimers. SCN3B is non-covalently associated with alpha subunits and induces the formation of alpha subunit oligomers, including trimers. Interacts with SCN5A/Nav1.5; regulatory subunit of SCN5A/Nav1.5. Interacts with SCN7A/Nav2.1; probable regulatory subunit of SCN7A/Nav2.1. Interacts with SCN10A; regulatory subunit of SCN10A/Nav1.8. Interacts with NFASC; probably involved in targeting the sodium channels to the nodes of Ranvier. Post-translationally, intramolecular disulfide bonds favor the voltage-gated sodium channel oligomeric complex assembly. In terms of processing, N-glycosylated.

Its subcellular location is the cell membrane. In terms of biological role, regulatory subunit of multiple voltage-gated sodium (Nav) channels directly mediating the depolarization of excitable membranes. Navs, also called VGSCs (voltage-gated sodium channels) or VDSCs (voltage-dependent sodium channels), operate by switching between closed and open conformations depending on the voltage difference across the membrane. In the open conformation they allow Na(+) ions to selectively pass through the pore, along their electrochemical gradient. The influx of Na+ ions provokes membrane depolarization, initiating the propagation of electrical signals throughout cells and tissues. The accessory beta subunits participate in localization and functional modulation of the Nav channels. Modulates the activity of SCN2A/Nav1.2, causing a hyperpolarizing shift in the voltage-dependence of inactivation of the channel and increasing the fraction of channels operating in the fast gating mode. Modulates the activity of SCN5A/Nav1.5. Could also regulate the atypical sodium channel SCN7A/Nav2.1. Modulates the activity of SCN10A/Nav1.8, regulating its oligomerization and accelerating the recovery from inactivation. The sequence is that of Sodium channel regulatory subunit beta-3 from Bos taurus (Bovine).